A 920-amino-acid polypeptide reads, in one-letter code: Translation initiation factor IF-2 (920 aa).

The tract at residues 33-305 (KSASSTVEAP…RGRKSKRAKR (273 aa)) is disordered. Over residues 53 to 86 (SKSAPAPAKSAGNGATAAPATSATPATAAAAAAP) the composition is skewed to low complexity. Pro residues-rich tracts occupy residues 87-159 (APAP…PAPR), 179-193 (PRPQ…PGTP), and 201-212 (NMPPRPAGPRPG). Over residues 225–291 (PGGRGPGGGG…GAAGAFGRPG (67 aa)) the composition is skewed to gly residues. The segment covering 295–304 (KRGRKSKRAK) has biased composition (basic residues). Positions 416–588 (IRPPVVTVMG…VLLTADASLD (173 aa)) constitute a tr-type G domain. The tract at residues 425–432 (GHVDHGKT) is G1. 425 to 432 (GHVDHGKT) provides a ligand contact to GTP. A G2 region spans residues 450–454 (GITQH). Positions 475-478 (DTPG) are G3. Residues 475–479 (DTPGH) and 529–532 (NKID) contribute to the GTP site. Residues 529 to 532 (NKID) are G4. The interval 565–567 (SAK) is G5.

This sequence belongs to the TRAFAC class translation factor GTPase superfamily. Classic translation factor GTPase family. IF-2 subfamily.

It is found in the cytoplasm. Functionally, one of the essential components for the initiation of protein synthesis. Protects formylmethionyl-tRNA from spontaneous hydrolysis and promotes its binding to the 30S ribosomal subunits. Also involved in the hydrolysis of GTP during the formation of the 70S ribosomal complex. This is Translation initiation factor IF-2 from Mycobacterium sp. (strain JLS).